A 196-amino-acid polypeptide reads, in one-letter code: Pyridoxine/pyridoxamine 5'-phosphate oxidase (196 aa).

Lys-49 contacts substrate. Residues Lys-66 and Gln-88 each contribute to the FMN site. Positions 106, 110, and 114 each coordinate substrate. Residues 123–124 and Trp-168 contribute to the FMN site; that span reads QS. 174–176 is a substrate binding site; that stretch reads RLH. An FMN-binding site is contributed by Arg-178.

The protein belongs to the pyridoxamine 5'-phosphate oxidase family. Homodimer. FMN serves as cofactor.

The enzyme catalyses pyridoxamine 5'-phosphate + O2 + H2O = pyridoxal 5'-phosphate + H2O2 + NH4(+). It catalyses the reaction pyridoxine 5'-phosphate + O2 = pyridoxal 5'-phosphate + H2O2. Its pathway is cofactor metabolism; pyridoxal 5'-phosphate salvage; pyridoxal 5'-phosphate from pyridoxamine 5'-phosphate: step 1/1. It participates in cofactor metabolism; pyridoxal 5'-phosphate salvage; pyridoxal 5'-phosphate from pyridoxine 5'-phosphate: step 1/1. In terms of biological role, catalyzes the oxidation of either pyridoxine 5'-phosphate (PNP) or pyridoxamine 5'-phosphate (PMP) into pyridoxal 5'-phosphate (PLP). The protein is Pyridoxine/pyridoxamine 5'-phosphate oxidase of Bdellovibrio bacteriovorus (strain ATCC 15356 / DSM 50701 / NCIMB 9529 / HD100).